The sequence spans 65 residues: Large ribosomal subunit protein bL35 (65 aa).

Residues 1–26 (MPKIKTVRGAAKRFKKTASGGFKRKQ) are disordered. Basic residues predominate over residues 10-26 (AAKRFKKTASGGFKRKQ).

Belongs to the bacterial ribosomal protein bL35 family.

This is Large ribosomal subunit protein bL35 from Haemophilus ducreyi (strain 35000HP / ATCC 700724).